Here is a 66-residue protein sequence, read N- to C-terminus: Large ribosomal subunit protein uL29 (66 aa).

Belongs to the universal ribosomal protein uL29 family.

The protein is Large ribosomal subunit protein uL29 of Francisella tularensis subsp. holarctica (strain LVS).